We begin with the raw amino-acid sequence, 142 residues long: Large ribosomal subunit protein uL11 (142 aa).

The protein belongs to the universal ribosomal protein uL11 family. In terms of assembly, part of the ribosomal stalk of the 50S ribosomal subunit. Interacts with L10 and the large rRNA to form the base of the stalk. L10 forms an elongated spine to which L12 dimers bind in a sequential fashion forming a multimeric L10(L12)X complex. One or more lysine residues are methylated.

Functionally, forms part of the ribosomal stalk which helps the ribosome interact with GTP-bound translation factors. The protein is Large ribosomal subunit protein uL11 of Photorhabdus laumondii subsp. laumondii (strain DSM 15139 / CIP 105565 / TT01) (Photorhabdus luminescens subsp. laumondii).